The sequence spans 143 residues: Large ribosomal subunit protein uL15 (143 aa).

Residues 1–59 (MELNTITPGQGAKHAKRRVGRGIGSGLGKTAGRGHKGQKSRSGGYHKVGFEGGQMPMQR) form a disordered region. The segment covering 21–31 (RGIGSGLGKTA) has biased composition (gly residues).

The protein belongs to the universal ribosomal protein uL15 family. Part of the 50S ribosomal subunit.

Binds to the 23S rRNA. This is Large ribosomal subunit protein uL15 from Polaromonas naphthalenivorans (strain CJ2).